Reading from the N-terminus, the 345-residue chain is MIERKQWTIKQAQELFDKPFFELLFQAQQVHRIYFDPQQVQVSTLLSIKTGACPEDCKYCPQSSRYKTGLEKERLMEVEQVIDSARKAKNAGSTRFCMGAAWKNPHERDMPYLEKMVKEVKALGMETCMTLGMLNGLQAQRLADAGLDYYNHNLDTSPEFYGNIITTRTYQDRLDTLDKVREAGIKVCSGGIVGLGEAIRDRAALLVQLANLPKPPESVPINMLVKVKGTPLAENEDVDPFDFIRTIAVARIMMPSSHVRLSAGREQMNEQTQAMCFMAGANSIFYGCKLLTTPNPAEDKDLQLFRKLGINLQQTQTAFGDNQQQQHLAEAIINADNEQFYNAAL.

One can recognise a Radical SAM core domain in the interval Gln-38–Ser-256. [4Fe-4S] cluster contacts are provided by Cys-53, Cys-57, and Cys-60. [2Fe-2S] cluster contacts are provided by Cys-97, Cys-128, Cys-188, and Arg-260.

The protein belongs to the radical SAM superfamily. Biotin synthase family. In terms of assembly, homodimer. Requires [4Fe-4S] cluster as cofactor. The cofactor is [2Fe-2S] cluster.

It carries out the reaction (4R,5S)-dethiobiotin + (sulfur carrier)-SH + 2 reduced [2Fe-2S]-[ferredoxin] + 2 S-adenosyl-L-methionine = (sulfur carrier)-H + biotin + 2 5'-deoxyadenosine + 2 L-methionine + 2 oxidized [2Fe-2S]-[ferredoxin]. Its pathway is cofactor biosynthesis; biotin biosynthesis; biotin from 7,8-diaminononanoate: step 2/2. Catalyzes the conversion of dethiobiotin (DTB) to biotin by the insertion of a sulfur atom into dethiobiotin via a radical-based mechanism. The chain is Biotin synthase from Photorhabdus laumondii subsp. laumondii (strain DSM 15139 / CIP 105565 / TT01) (Photorhabdus luminescens subsp. laumondii).